A 422-amino-acid polypeptide reads, in one-letter code: Metallocarboxypeptidase A (422 aa).

A signal peptide spans 1 to 17 (MRSVLSLALLAANVVTA). A propeptide spans 18–112 (AVVSPFDYSG…FEAYSAGYAP (95 aa)) (activation peptide). A Peptidase M14 domain is found at 119–419 (SYHSYQDHLS…AGTVAMLKAV (301 aa)). Residues histidine 179 and glutamate 182 each coordinate Zn(2+). Substrate is bound by residues 179–182 (HARE), arginine 237, and 254–255 (NR). Cysteines 248 and 271 form a disulfide. Position 309 (histidine 309) interacts with Zn(2+). 310-311 (SY) is a binding site for substrate. Catalysis depends on glutamate 385, which acts as the Proton donor/acceptor.

Belongs to the peptidase M14 family. Zn(2+) is required as a cofactor.

It localises to the secreted. Extracellular metalloprotease that contributes to pathogenicity. This Trichophyton rubrum (Athlete's foot fungus) protein is Metallocarboxypeptidase A (MCPA).